Consider the following 193-residue polypeptide: Probable chorismate pyruvate-lyase (193 aa).

Positions 81, 119, and 177 each coordinate substrate.

The protein belongs to the UbiC family.

It localises to the cytoplasm. The catalysed reaction is chorismate = 4-hydroxybenzoate + pyruvate. It functions in the pathway cofactor biosynthesis; ubiquinone biosynthesis. Removes the pyruvyl group from chorismate, with concomitant aromatization of the ring, to provide 4-hydroxybenzoate (4HB) for the ubiquinone pathway. In Idiomarina loihiensis (strain ATCC BAA-735 / DSM 15497 / L2-TR), this protein is Probable chorismate pyruvate-lyase.